The following is a 78-amino-acid chain: Acyl carrier protein (78 aa).

The region spanning 2–77 (SDIEQRVKKI…QAIDYVNANL (76 aa)) is the Carrier domain. An O-(pantetheine 4'-phosphoryl)serine modification is found at serine 37.

Belongs to the acyl carrier protein (ACP) family. Post-translationally, 4'-phosphopantetheine is transferred from CoA to a specific serine of apo-ACP by AcpS. This modification is essential for activity because fatty acids are bound in thioester linkage to the sulfhydryl of the prosthetic group.

The protein localises to the cytoplasm. It functions in the pathway lipid metabolism; fatty acid biosynthesis. Its function is as follows. Carrier of the growing fatty acid chain in fatty acid biosynthesis. The sequence is that of Acyl carrier protein from Methylobacillus flagellatus (strain ATCC 51484 / DSM 6875 / VKM B-1610 / KT).